The primary structure comprises 1073 residues: Semaphorin-6D (1073 aa).

Residues 1–20 form the signal peptide; it reads MRVFLLCAYILLLMVSQLRA. Over 21-662 the chain is Extracellular; the sequence is VSFPEDDEPL…GESNQMVHMN (642 aa). The Sema domain maps to 27-512; sequence DEPLNTVDYH…FSSCIIRIPL (486 aa). Residue Asn-51 is glycosylated (N-linked (GlcNAc...) asparagine). 4 disulfides stabilise this stretch: Cys-108/Cys-118, Cys-136/Cys-145, Cys-259/Cys-370, and Cys-284/Cys-329. Asn-283 carries an N-linked (GlcNAc...) asparagine glycan. N-linked (GlcNAc...) asparagine glycosylation is found at Asn-435 and Asn-461. Disulfide bonds link Cys-477-Cys-506, Cys-515-Cys-533, Cys-521-Cys-568, and Cys-525-Cys-541. The 56-residue stretch at 514-569 folds into the PSI domain; the sequence is RCERYGSCKKSCIASRDPYCGWLSQGSCGRVTPGMLAEGYEQDTEFGNTAHLGDCH. The N-linked (GlcNAc...) asparagine glycan is linked to Asn-631. Residues 663-683 traverse the membrane as a helical segment; sequence VLITCVFAAFVLGAFIAGVAV. Topologically, residues 684 to 1073 are cytoplasmic; sequence YCYRDMFVRK…SVRPLNKYTY (390 aa). Phosphoserine occurs at positions 723, 734, and 744. Disordered stretches follow at residues 744 to 775, 787 to 825, 839 to 874, 914 to 1005, and 1021 to 1073; these read SRKE…PTPE, AMKS…GHIP, TSFS…RSVD, SMSE…PTPT, and LQPS…KYTY. Thr-773 is subject to Phosphothreonine. The segment covering 790–805 has biased composition (basic and acidic residues); the sequence is SHSEKAHGHGASRKET. 3 positions are modified to phosphoserine: Ser-931, Ser-957, and Ser-983. Positions 931–942 are enriched in polar residues; it reads SPPSTLPRNSPT. 2 stretches are compositionally biased toward polar residues: residues 980 to 995 and 1021 to 1037; these read NLNS…QPSM and LQPS…NGTL.

This sequence belongs to the semaphorin family.

It localises to the cell membrane. Its subcellular location is the cytoplasm. Functionally, shows growth cone collapsing activity on dorsal root ganglion (DRG) neurons in vitro. May be a stop signal for the DRG neurons in their target areas, and possibly also for other neurons. May also be involved in the maintenance and remodeling of neuronal connections. Ligand of TREM2 with PLXNA1 as coreceptor in dendritic cells, plays a role in the generation of immune responses and skeletal homeostasis. The sequence is that of Semaphorin-6D from Homo sapiens (Human).